The sequence spans 734 residues: MATKFPKFSQALAQDPATRRIWYGLATAHDLESHDGMTEENLYQKIFASHFGHLAVIFLWTSGNLFHVAWQGNFEQWVLNPLKVKPIAHAIWDPHFGQPAVKAFTKGGVSYPVNIATSGVYHWWYTIGMRSNTDLYAGSLFLLFLAGVFLFAGWLHLQPKFRPGLSWFKNNESRLNHHLSGLFGFSSLAWSAHLIHVAIPEARGQHVCWDNFTKVAPHPAGLQPFFTGNWGAYAASPDTTNHIFGTSEGAGTAILTFLGGFHPQTQALWLTDIAHHHLAIGVVFIFAGHMYRTNWGIGHSLKEILDAHRPPGGRLGAGHKGIFETLTNSLHFQLGLALASLGVITSLVAQHMYALPSYAFIAKDYVTQSALYTHHQYIAGFLMVGAFAHGAIFFVRDYDPEQNKNNVLARILDHKEAIISHLSWVSLFLGFHTLGIYVHNDVVVAFGTPEKQILVEPVFAQWIQASSGKALYGFDVLLSSTNSVAANASSNIWLPGWLEAINSGKNSLFLPIGPGDFLIHHAIALALHTTTLILVKGALDARGSKLMPDKKDFGYAFPCDGPGRGGTCDISAWDAFYLSMFWMLNTIGWVTFYWHWKHITIWQGNAGQFNESSTYIMGWLRDYLWLNSSPLINGYNPFGMNSLSVWSWMFLFGHLIWATGFMFLISWRGYWQELIETLVWAHERTPLANLVRWKDKPVALSIVQARLVGLIHFTAGYIFTYAAFVIASTTGKFG.

8 consecutive transmembrane segments (helical) span residues 46-69 (IFASHFGHLAVIFLWTSGNLFHVA), 135-158 (LYAGSLFLLFLAGVFLFAGWLHLQ), 175-199 (LNHHLSGLFGFSSLAWSAHLIHVAI), 273-291 (IAHHHLAIGVVFIFAGHMY), 330-353 (LHFQLGLALASLGVITSLVAQHMY), 369-395 (SALYTHHQYIAGFLMVGAFAHGAIFFV), 417-439 (AIISHLSWVSLFLGFHTLGIYVH), and 517-535 (FLIHHAIALALHTTTLILV). [4Fe-4S] cluster is bound by residues C559 and C568. 2 consecutive transmembrane segments (helical) span residues 575–596 (AFYLSMFWMLNTIGWVTFYWHW) and 643–665 (LSVWSWMFLFGHLIWATGFMFLI). Residues H654, M662, and Y670 each contribute to the chlorophyll a site. W671 is a phylloquinone binding site. A helical membrane pass occupies residues 707-727 (LVGLIHFTAGYIFTYAAFVIA).

This sequence belongs to the PsaA/PsaB family. In terms of assembly, the PsaA/B heterodimer binds the P700 chlorophyll special pair and subsequent electron acceptors. PSI consists of a core antenna complex that captures photons, and an electron transfer chain that converts photonic excitation into a charge separation. The eukaryotic PSI reaction center is composed of at least 11 subunits. Requires P700 is a chlorophyll a/chlorophyll a' dimer, A0 is one or more chlorophyll a, A1 is one or both phylloquinones and FX is a shared 4Fe-4S iron-sulfur center. as cofactor.

The protein resides in the plastid. It is found in the chloroplast thylakoid membrane. The catalysed reaction is reduced [plastocyanin] + hnu + oxidized [2Fe-2S]-[ferredoxin] = oxidized [plastocyanin] + reduced [2Fe-2S]-[ferredoxin]. In terms of biological role, psaA and PsaB bind P700, the primary electron donor of photosystem I (PSI), as well as the electron acceptors A0, A1 and FX. PSI is a plastocyanin/cytochrome c6-ferredoxin oxidoreductase, converting photonic excitation into a charge separation, which transfers an electron from the donor P700 chlorophyll pair to the spectroscopically characterized acceptors A0, A1, FX, FA and FB in turn. Oxidized P700 is reduced on the lumenal side of the thylakoid membrane by plastocyanin or cytochrome c6. In Rhodomonas salina (Cryptomonas salina), this protein is Photosystem I P700 chlorophyll a apoprotein A2.